The primary structure comprises 151 residues: Putative pre-16S rRNA nuclease (151 aa).

Belongs to the YqgF nuclease family.

It localises to the cytoplasm. In terms of biological role, could be a nuclease involved in processing of the 5'-end of pre-16S rRNA. The sequence is that of Putative pre-16S rRNA nuclease from Methylococcus capsulatus (strain ATCC 33009 / NCIMB 11132 / Bath).